The following is a 316-amino-acid chain: Olfactory receptor 52A5 (316 aa).

Residues 1 to 27 lie on the Extracellular side of the membrane; that stretch reads MPTFNGSVFMPSAFILIGIPGLESVQC. N-linked (GlcNAc...) asparagine glycosylation is present at Asn5. The helical transmembrane segment at 28 to 48 threads the bilayer; it reads WIGIPFSAMYLIGVIGNSLIL. Over 49 to 56 the chain is Cytoplasmic; that stretch reads VIIKYENS. Residues 57–77 traverse the membrane as a helical segment; the sequence is LHIPMYIFLAMLAATDIALNT. Over 78–101 the chain is Extracellular; the sequence is CILPKMLGIFWFHLPEISFDACLF. Residues 102-122 traverse the membrane as a helical segment; sequence QMWLIHSFQAIESGILLAMAL. Topologically, residues 123–141 are cytoplasmic; the sequence is DRYVAICIPLRHATIFSQQ. A helical membrane pass occupies residues 142-162; sequence FLTHIGLGVTLRAAILIIPSL. The Extracellular portion of the chain corresponds to 163–199; sequence GLIKCCLKHYRTTVISHSYCEHMAIVKLATEDIRVNK. The helical transmembrane segment at 200–220 threads the bilayer; sequence IYGLFVAFAILGFDIIFITLS. At 221–240 the chain is on the cytoplasmic side; it reads YVQIFITVFQLPQKEARFKA. Residues 241–261 form a helical membrane-spanning segment; the sequence is FNTCIAHICVFLQFYLLAFFS. At 262 to 276 the chain is on the extracellular side; that stretch reads FFTHRFGSHIPPYIH. A helical membrane pass occupies residues 277–297; the sequence is ILLSNLYLLVPPFLNPIVYGV. The Cytoplasmic segment spans residues 298–316; sequence KTKQIRDHIVKVFFFKKVT.

Belongs to the G-protein coupled receptor 1 family.

The protein localises to the cell membrane. Functionally, odorant receptor. In Homo sapiens (Human), this protein is Olfactory receptor 52A5 (OR52A5).